The primary structure comprises 132 residues: MSVSDPLGDMLTRIRNAVGRKKTKVSTPASKLRARVLDVLQAEGYIRGYTQSEFENGKAEIEIELKYYEGVPVIREITRVSKPGRRVYVSVKSIPQVANGLGISILSTPKGVMADHEAREQNVGGELLCRIF.

It belongs to the universal ribosomal protein uS8 family. Part of the 30S ribosomal subunit. Contacts proteins S5 and S12.

Functionally, one of the primary rRNA binding proteins, it binds directly to 16S rRNA central domain where it helps coordinate assembly of the platform of the 30S subunit. The protein is Small ribosomal subunit protein uS8 of Brucella ovis (strain ATCC 25840 / 63/290 / NCTC 10512).